The chain runs to 483 residues: Coagulation factor X isoform 1 (483 aa).

An N-terminal signal peptide occupies residues 1–20; it reads MAPQLLLCLILTFLWSLPEA. Residues 21 to 40 constitute a propeptide that is removed on maturation; that stretch reads ESNVFLKSKVANRFLQRTKR. The Gla domain maps to 41-86; that stretch reads ANSLFEEFKSGNIERECIEERCSKEEAREAFEDDEKTETFWNVYVD. A 4-carboxyglutamate mark is found at Glu-46, Glu-47, Glu-54, Glu-56, Glu-59, Glu-60, Glu-65, Glu-66, Glu-69, Glu-72, and Glu-75. Residues Cys-57 and Cys-62 are joined by a disulfide bond. Positions 86–122 constitute an EGF-like 1; calcium-binding domain; sequence DGDQCSSNPCHYGGTCKDGIGSYTCTCLSGYEGKNCE. Cystine bridges form between Cys-90/Cys-101, Cys-95/Cys-110, Cys-112/Cys-121, Cys-129/Cys-140, Cys-136/Cys-149, Cys-151/Cys-164, Cys-172/Cys-345, Cys-245/Cys-250, Cys-265/Cys-281, Cys-393/Cys-407, and Cys-418/Cys-446. An O-linked (Hex...) serine glycan is attached at Ser-92. A (3R)-3-hydroxyaspartate modification is found at Asp-103. One can recognise an EGF-like 2 domain in the interval 125–165; the sequence is LYKSCRVDNGDCWHFCKPVQNGIQCSCAESYLLGEDGHSCV. Positions 183-238 are cleaved as a propeptide — activation peptide; the sequence is EANLPDFQTDFSDDYDEIDENNFVETPTNFSGLVLTVQSQNATLLKKSDNPSPDIR. The Peptidase S1 domain maps to 239–470; that stretch reads VVNGTDCKLG…FILWIKRIIR (232 aa). The active-site Charge relay system is the His-280. Asn-283 is a glycosylation site (N-linked (GlcNAc...) asparagine). The Charge relay system role is filled by Asp-325. Ser-422 serves as the catalytic Charge relay system.

This sequence belongs to the peptidase S1 family. As to quaternary structure, heterodimer of a light chain and a heavy chain; disulfide-linked. Gamma-carboxyglutamate residues are formed by vitamin K dependent carboxylation. These residues are essential for the binding of calcium. In terms of processing, the activation peptide is cleaved by factor IXa (in the intrinsic pathway), or by factor VIIa (in the extrinsic pathway). Post-translationally, the iron and 2-oxoglutarate dependent 3-hydroxylation of aspartate and asparagine is (R) stereospecific within EGF domains. Plasma; synthesized in the liver.

The protein localises to the secreted. It carries out the reaction Selective cleavage of Arg-|-Thr and then Arg-|-Ile bonds in prothrombin to form thrombin.. Its function is as follows. Factor Xa is a vitamin K-dependent glycoprotein that converts prothrombin to thrombin in the presence of factor Va, calcium and phospholipid during blood clotting. The protein is Coagulation factor X isoform 1 (F10) of Pseudonaja textilis (Eastern brown snake).